Reading from the N-terminus, the 29-residue chain is Varv peptide E (29 aa).

Residues 1 to 29 (GLPICGETCVGGTCNTPGCSCSWPVCTRN) constitute a cross-link (cyclopeptide (Gly-Asn)). 3 disulfide bridges follow: cysteine 5/cysteine 19, cysteine 9/cysteine 21, and cysteine 14/cysteine 26.

Post-translationally, this is a cyclic peptide.

Functionally, probably participates in a plant defense mechanism. Has cytotoxic activity against human lymphoma U-937 GTB and human myeloma RPMI-8226/s cell lines. The protein is Varv peptide E of Viola arvensis (European field pansy).